A 942-amino-acid polypeptide reads, in one-letter code: Isoleucine--tRNA ligase (942 aa).

Residues 58–68 carry the 'HIGH' region motif; the sequence is PYVNGSIHLGH. E564 contacts L-isoleucyl-5'-AMP. A 'KMSKS' region motif is present at residues 605–609; it reads KMSKS. An ATP-binding site is contributed by K608. Zn(2+) is bound by residues C905, C908, C925, and C928.

The protein belongs to the class-I aminoacyl-tRNA synthetase family. IleS type 1 subfamily. As to quaternary structure, monomer. Zn(2+) is required as a cofactor.

The protein localises to the cytoplasm. It catalyses the reaction tRNA(Ile) + L-isoleucine + ATP = L-isoleucyl-tRNA(Ile) + AMP + diphosphate. Functionally, catalyzes the attachment of isoleucine to tRNA(Ile). As IleRS can inadvertently accommodate and process structurally similar amino acids such as valine, to avoid such errors it has two additional distinct tRNA(Ile)-dependent editing activities. One activity is designated as 'pretransfer' editing and involves the hydrolysis of activated Val-AMP. The other activity is designated 'posttransfer' editing and involves deacylation of mischarged Val-tRNA(Ile). The polypeptide is Isoleucine--tRNA ligase (Blochmanniella pennsylvanica (strain BPEN)).